The chain runs to 257 residues: Gamma-secretase subunit APH-1B (257 aa).

Helical transmembrane passes span 5-25, 32-52, 66-86, 115-135, 160-180, 186-206, and 213-233; these read VFFG…VFTI, VIFL…SSVF, PVQN…QELF, LLAY…SFVN, AFMT…FFDG, WYTL…TFLS, and LVTA…VAGG.

It belongs to the APH-1 family. Probable component of the gamma-secretase complex, a complex composed of a presenilin homodimer (PSEN1 or PSEN2), nicastrin (NCSTN), APH1 (APH1A or APH1B) and PEN2. Such minimal complex is sufficient for secretase activity, although other components may exist. Interacts with PSEN1 and PSEN2.

The protein localises to the membrane. Probable subunit of the gamma-secretase complex, an endoprotease complex that catalyzes the intramembrane cleavage of integral proteins such as Notch receptors and APP (amyloid-beta precursor protein). It probably represents a stabilizing cofactor for the presenilin homodimer that promotes the formation of a stable complex. Probably present in a minority of gamma-secretase complexes compared to APH1A. The sequence is that of Gamma-secretase subunit APH-1B (Aph1b) from Mus musculus (Mouse).